Reading from the N-terminus, the 360-residue chain is Phenylalanine--tRNA ligase alpha subunit (360 aa).

Glu-260 provides a ligand contact to Mg(2+).

Belongs to the class-II aminoacyl-tRNA synthetase family. Phe-tRNA synthetase alpha subunit type 1 subfamily. Tetramer of two alpha and two beta subunits. It depends on Mg(2+) as a cofactor.

It is found in the cytoplasm. The catalysed reaction is tRNA(Phe) + L-phenylalanine + ATP = L-phenylalanyl-tRNA(Phe) + AMP + diphosphate + H(+). The chain is Phenylalanine--tRNA ligase alpha subunit from Methylobacterium sp. (strain 4-46).